Here is a 277-residue protein sequence, read N- to C-terminus: Large ribosomal subunit protein uL2 (277 aa).

Disordered stretches follow at residues 38 to 58 and 219 to 277; these read HRKG…GGGH and TVRG…RKNK.

This sequence belongs to the universal ribosomal protein uL2 family. As to quaternary structure, part of the 50S ribosomal subunit. Forms a bridge to the 30S subunit in the 70S ribosome.

One of the primary rRNA binding proteins. Required for association of the 30S and 50S subunits to form the 70S ribosome, for tRNA binding and peptide bond formation. It has been suggested to have peptidyltransferase activity; this is somewhat controversial. Makes several contacts with the 16S rRNA in the 70S ribosome. The sequence is that of Large ribosomal subunit protein uL2 from Bacillus pumilus (strain SAFR-032).